The primary structure comprises 320 residues: MNKKIGITLGDPAGIGPELILKISKHFKEKFTYVIYGEEKTLLEASKLTGIKLNYKKIEKVEEAKERGVYLIDLNVLKVPVVEPSVSSGKAAVAYLARAVADAIRGNIHGILTMPINKFWAKKAGFQYEGQTEFLAKASGTKDYAMMMYSEKLKVVLLTTHIPLKDVPNYVKKEEILKKVRLIRKEFLEKFKFEPLIKVLGLNPHAGEMGELGREEIEEIIPAVEEAKKEGIKVVGPLVPDVAFINPSEEDVFLCMYHDQGLIPFKMLAFDEGVNFTLGLPFIRTSPDHGTAYDIAWKNKARESSSLHALRLIEDLLDKI.

T132 lines the substrate pocket. 3 residues coordinate a divalent metal cation: H161, H205, and H258. Residues K266, N275, and R284 each contribute to the substrate site.

It belongs to the PdxA family. In terms of assembly, homodimer. The cofactor is a divalent metal cation.

It is found in the cytoplasm. The enzyme catalyses 4-(phosphooxy)-L-threonine + NAD(+) = 3-amino-2-oxopropyl phosphate + CO2 + NADH. It participates in cofactor biosynthesis; pyridoxine 5'-phosphate biosynthesis; pyridoxine 5'-phosphate from D-erythrose 4-phosphate: step 4/5. Its function is as follows. Catalyzes the NAD(P)-dependent oxidation of 4-(phosphooxy)-L-threonine (HTP) into 2-amino-3-oxo-4-(phosphooxy)butyric acid which spontaneously decarboxylates to form 3-amino-2-oxopropyl phosphate (AHAP). The polypeptide is 4-hydroxythreonine-4-phosphate dehydrogenase (Aquifex aeolicus (strain VF5)).